A 394-amino-acid polypeptide reads, in one-letter code: Guanine nucleotide-binding protein G(s) subunit alpha (394 aa).

The interval 1-25 (MGCLGDSKTEDQRNEEKAQREANKK) is disordered. G2 is lipidated: N-palmitoyl glycine. A lipid anchor (S-palmitoyl cysteine) is attached at C3. Basic and acidic residues predominate over residues 7–25 (SKTEDQRNEEKAQREANKK). One can recognise a G-alpha domain in the interval 39–394 (ATHRLLLLGA…RMHLRQYELL (356 aa)). The segment at 42 to 55 (RLLLLGAGESGKST) is G1 motif. A GTP-binding site is contributed by 47–55 (GAGESGKST). S54 contributes to the Mg(2+) binding site. Positions 68 to 90 (FNGEGGEEDPQAARSNSDGEKAT) are disordered. Residues 196-204 (DLLRCRVLT) are G2 motif. Residues 197 to 204 (LLRCRVLT), 223 to 227 (DVGGQ), 292 to 295 (NKQD), and A366 contribute to the GTP site. T204 contributes to the Mg(2+) binding site. The G3 motif stretch occupies residues 219–228 (FHMFDVGGQR). The G4 motif stretch occupies residues 288 to 295 (ILFLNKQD). The interval 364-369 (TCAVDT) is G5 motif.

The protein belongs to the G-alpha family. G(s) subfamily. Heterotrimeric G proteins are composed of 3 units; alpha, beta and gamma. The alpha chain contains the guanine nucleotide binding site. Interacts with CRY1; the interaction may block GPCR-mediated regulation of cAMP concentrations. Interacts with ADCY6 and stimulates its adenylyl cyclase activity. Interacts with ADCY2 and ADCY5. Stimulates the ADCY5 adenylyl cyclase activity. Interaction with SASH1.

The protein localises to the cell membrane. Functionally, guanine nucleotide-binding proteins (G proteins) function as transducers in numerous signaling pathways controlled by G protein-coupled receptors (GPCRs). Signaling involves the activation of adenylyl cyclases, resulting in increased levels of the signaling molecule cAMP. GNAS functions downstream of several GPCRs, including beta-adrenergic receptors. Stimulates the Ras signaling pathway via RAPGEF2. The polypeptide is Guanine nucleotide-binding protein G(s) subunit alpha (GNAS) (Cricetulus longicaudatus (Long-tailed dwarf hamster)).